The primary structure comprises 195 residues: Imidazoleglycerol-phosphate dehydratase (195 aa).

It belongs to the imidazoleglycerol-phosphate dehydratase family.

The protein localises to the cytoplasm. It catalyses the reaction D-erythro-1-(imidazol-4-yl)glycerol 3-phosphate = 3-(imidazol-4-yl)-2-oxopropyl phosphate + H2O. It participates in amino-acid biosynthesis; L-histidine biosynthesis; L-histidine from 5-phospho-alpha-D-ribose 1-diphosphate: step 6/9. The sequence is that of Imidazoleglycerol-phosphate dehydratase from Burkholderia ambifaria (strain MC40-6).